A 332-amino-acid polypeptide reads, in one-letter code: UDP-galactose/UDP-glucose transporter 1 (332 aa).

Transmembrane regions (helical) follow at residues 11-31 (ILLL…QGVL), 49-69 (HLAF…YIMI), 80-100 (APWW…AMGI), 112-132 (VLAK…VYGI), 135-155 (TFPE…FALL), 206-226 (IMLG…FGLP), 252-272 (ICGA…GSLA), and 301-317 (WGCV…QIYL). The short motif at 327–332 (KKKQKS) is the Di-lysine motif element.

Belongs to the nucleotide-sugar transporter family. UDP-galactose:UMP antiporter (TC 2.A.7.11) subfamily.

It localises to the endoplasmic reticulum membrane. Functionally, essential sugar transporter required for the transport of UDP-galactose and UDP-glucose from the cytoplasm into the Golgi and the endoplasmic reticulum, to ensure quality control of protein folding. Essential for pollen development and involved in embryo sac progress. This Arabidopsis thaliana (Mouse-ear cress) protein is UDP-galactose/UDP-glucose transporter 1.